The sequence spans 346 residues: B3 domain-containing protein At5g60142 (346 aa).

Residues P13–A109 constitute a DNA-binding region (TF-B3). Disordered regions lie at residues Q158–D179 and T192–Q243. The segment covering T192–A217 has biased composition (acidic residues). The segment covering D218–T229 has biased composition (basic and acidic residues).

Its subcellular location is the nucleus. In Arabidopsis thaliana (Mouse-ear cress), this protein is B3 domain-containing protein At5g60142.